We begin with the raw amino-acid sequence, 608 residues long: Probable cytosolic Fe-S cluster assembly factor SPAC806.02c (608 aa).

13–20 contributes to the ATP binding site; sequence GKGGVGKS. Cysteine 201 and cysteine 204 together coordinate [4Fe-4S] cluster. 7 WD repeats span residues 288-327, 331-371, 376-415, 421-460, 465-504, 529-567, and 576-608; these read GHTG…LVHV, FHTR…WECT, GHEN…EFDC, EHTQ…WALT, GHTN…EDVA, IHKG…EALW, and AHGV…WSFK.

The protein in the N-terminal section; belongs to the Mrp/NBP35 ATP-binding proteins family. NUBP2/CFD1 subfamily. In the C-terminal section; belongs to the WD repeat CIA1 family. Heterotetramer of 2 nbp35 and 2 SPAC806.02c chains. It depends on [4Fe-4S] cluster as a cofactor.

Its subcellular location is the cytoplasm. The protein localises to the nucleus. In terms of biological role, fusion protein of two essential components of the cytosolic iron-sulfur (Fe/S) protein assembly (CIA) machinery. Required for maturation of extramitochondrial Fe-S proteins. May form a heterotetramer with nubp35, functioning as a Fe-S scaffold complex, mediating the de novo assembly of an Fe-S cluster and its transfer to target apoproteins. This chain is Probable cytosolic Fe-S cluster assembly factor SPAC806.02c, found in Schizosaccharomyces pombe (strain 972 / ATCC 24843) (Fission yeast).